The following is a 159-amino-acid chain: Cytochrome c-type biogenesis protein CcmE (159 aa).

At 1–8 (MHPIRKKR) the chain is on the cytoplasmic side. Residues 9–29 (LTIVLFLVAGIAIAVGLTTYA) form a helical; Signal-anchor for type II membrane protein membrane-spanning segment. At 30-159 (LRQNINLFYD…VEKAAETTAY (130 aa)) the chain is on the periplasmic side. Heme is bound by residues H124 and Y128. The disordered stretch occupies residues 135-159 (EALERSSKGQHKSADVEKAAETTAY). A compositionally biased stretch (basic and acidic residues) spans 136–159 (ALERSSKGQHKSADVEKAAETTAY).

This sequence belongs to the CcmE/CycJ family.

It localises to the cell inner membrane. Heme chaperone required for the biogenesis of c-type cytochromes. Transiently binds heme delivered by CcmC and transfers the heme to apo-cytochromes in a process facilitated by CcmF and CcmH. This chain is Cytochrome c-type biogenesis protein CcmE, found in Marinobacter nauticus (strain ATCC 700491 / DSM 11845 / VT8) (Marinobacter aquaeolei).